The following is a 236-amino-acid chain: Purine nucleoside phosphorylase DeoD-type (236 aa).

An a purine D-ribonucleoside-binding site is contributed by His-5. Phosphate-binding positions include Gly-21, Arg-25, Arg-44, and 88-91 (RVGT). A purine D-ribonucleoside-binding positions include 180-182 (EME) and 204-205 (SD). Residue Asp-205 is the Proton donor of the active site.

The protein belongs to the PNP/UDP phosphorylase family. Homohexamer; trimer of homodimers.

The enzyme catalyses a purine D-ribonucleoside + phosphate = a purine nucleobase + alpha-D-ribose 1-phosphate. The catalysed reaction is a purine 2'-deoxy-D-ribonucleoside + phosphate = a purine nucleobase + 2-deoxy-alpha-D-ribose 1-phosphate. Functionally, catalyzes the reversible phosphorolytic breakdown of the N-glycosidic bond in the beta-(deoxy)ribonucleoside molecules, with the formation of the corresponding free purine bases and pentose-1-phosphate. The chain is Purine nucleoside phosphorylase DeoD-type from Shewanella loihica (strain ATCC BAA-1088 / PV-4).